The sequence spans 266 residues: Uxu operon regulator (266 aa).

The HTH gntR-type domain maps to 23-91; sequence NRTYTRIGQL…KGSGVYVVRT (69 aa). Positions 51 to 70 form a DNA-binding region, H-T-H motif; the sequence is EREISEKFGVSRTIVREAMV.

In terms of biological role, repressor for the uxuRBA operon. The chain is Uxu operon regulator (uxuR) from Haemophilus influenzae (strain ATCC 51907 / DSM 11121 / KW20 / Rd).